The following is a 338-amino-acid chain: Ketol-acid reductoisomerase (NADP(+)) (338 aa).

One can recognise a KARI N-terminal Rossmann domain in the interval 1 to 181 (MKVYYDKDAD…GGGKAGIIET (181 aa)). Residues 24–27 (YGSQ), Arg-47, and Ser-52 contribute to the NADP(+) site. Residue His-107 is part of the active site. Gly-133 lines the NADP(+) pocket. Positions 182–327 (NFREETETDL…EKLRAMMPWI (146 aa)) constitute a KARI C-terminal knotted domain. Mg(2+) contacts are provided by Asp-190, Glu-194, Glu-226, and Glu-230. Substrate is bound at residue Ser-251.

It belongs to the ketol-acid reductoisomerase family. It depends on Mg(2+) as a cofactor.

It carries out the reaction (2R)-2,3-dihydroxy-3-methylbutanoate + NADP(+) = (2S)-2-acetolactate + NADPH + H(+). The enzyme catalyses (2R,3R)-2,3-dihydroxy-3-methylpentanoate + NADP(+) = (S)-2-ethyl-2-hydroxy-3-oxobutanoate + NADPH + H(+). The protein operates within amino-acid biosynthesis; L-isoleucine biosynthesis; L-isoleucine from 2-oxobutanoate: step 2/4. Its pathway is amino-acid biosynthesis; L-valine biosynthesis; L-valine from pyruvate: step 2/4. Its function is as follows. Involved in the biosynthesis of branched-chain amino acids (BCAA). Catalyzes an alkyl-migration followed by a ketol-acid reduction of (S)-2-acetolactate (S2AL) to yield (R)-2,3-dihydroxy-isovalerate. In the isomerase reaction, S2AL is rearranged via a Mg-dependent methyl migration to produce 3-hydroxy-3-methyl-2-ketobutyrate (HMKB). In the reductase reaction, this 2-ketoacid undergoes a metal-dependent reduction by NADPH to yield (R)-2,3-dihydroxy-isovalerate. The sequence is that of Ketol-acid reductoisomerase (NADP(+)) from Methylibium petroleiphilum (strain ATCC BAA-1232 / LMG 22953 / PM1).